A 247-amino-acid polypeptide reads, in one-letter code: MTALTAQVALVTGASRGIGKATALALAATGMKVVVNYAQSSTAADAVVAEIIANGGEAIAVQANVANADEVDQLIKTTLDKFSRIDVLVNNAGITRDTLLLRMKLEDWQAVIDLNLTGVFLCTKAVSKLMLKQKSGRIINITSVAGMMGNPGQANYSAAKAGVIGFTKTVAKELASRGVTVNAVAPGFIATDMTENLNAEPILQFIPLARYGQPEEVAGTIRFLATDPAAAYITGQTFNVDGGMVMF.

11–35 is a binding site for NADP(+); it reads VTGASRGIGKATALALAATGMKVVV. S143 contributes to the substrate binding site. The active-site Proton acceptor is Y156.

The protein belongs to the short-chain dehydrogenases/reductases (SDR) family.

The enzyme catalyses a (3R)-hydroxyacyl-[ACP] + NADP(+) = a 3-oxoacyl-[ACP] + NADPH + H(+). The protein operates within lipid metabolism; fatty acid biosynthesis. Functionally, catalyzes the NADPH-dependent reduction of beta-ketoacyl-ACP substrates to beta-hydroxyacyl-ACP products, the first reductive step in the elongation cycle of fatty acid biosynthesis. Is capable of reducing acetoacetyl-CoA, but less well than its paralog PhaB. This is 3-oxoacyl-[acyl-carrier-protein] reductase (fabG) from Synechocystis sp. (strain ATCC 27184 / PCC 6803 / Kazusa).